The following is a 122-amino-acid chain: Large ribosomal subunit protein bL12 (122 aa).

This sequence belongs to the bacterial ribosomal protein bL12 family. In terms of assembly, homodimer. Part of the ribosomal stalk of the 50S ribosomal subunit. Forms a multimeric L10(L12)X complex, where L10 forms an elongated spine to which 2 to 4 L12 dimers bind in a sequential fashion. Binds GTP-bound translation factors.

Forms part of the ribosomal stalk which helps the ribosome interact with GTP-bound translation factors. Is thus essential for accurate translation. This is Large ribosomal subunit protein bL12 from Neisseria lactamica.